Here is a 340-residue protein sequence, read N- to C-terminus: Guanine nucleotide-binding protein subunit beta-1 (340 aa).

A Phosphoserine modification is found at Ser29. WD repeat units follow at residues 53 to 92 (GHLA…KVHA), 95 to 134 (LRSS…GNVR), 141 to 179 (GHGG…QVTS), 182 to 221 (GHTG…CKQT), 224 to 263 (GHES…ELAM), 268 to 307 (NIIC…RSGI), and 310 to 340 (GHDN…RVWN).

This sequence belongs to the WD repeat G protein beta family. As to quaternary structure, g proteins are composed of 3 units, alpha, beta and gamma. In terms of tissue distribution, expressed in the brain neuropil and cortex, and the thoracic ganglion (at protein level). Expression detected in eye at protein level but not at mRNA level, suggesting cross reactivity of antibodies to the similar Gbeta76C protein.

Guanine nucleotide-binding proteins (G proteins) are involved as a modulator or transducer in various transmembrane signaling systems. The beta and gamma chains are required for the GTPase activity, for replacement of GDP by GTP, and for G protein-effector interaction. The sequence is that of Guanine nucleotide-binding protein subunit beta-1 (Gbeta13F) from Drosophila melanogaster (Fruit fly).